The chain runs to 338 residues: Methionine import ATP-binding protein MetN 2 (338 aa).

Residues 2-242 enclose the ABC transporter domain; it reads IQLEGVSVDF…PQHAFTRQLV (241 aa). ATP is bound at residue 39-46; the sequence is GTSGAGKS.

This sequence belongs to the ABC transporter superfamily. Methionine importer (TC 3.A.1.24) family. As to quaternary structure, the complex is composed of two ATP-binding proteins (MetN), two transmembrane proteins (MetI) and a solute-binding protein (MetQ).

It is found in the cell inner membrane. It carries out the reaction L-methionine(out) + ATP + H2O = L-methionine(in) + ADP + phosphate + H(+). It catalyses the reaction D-methionine(out) + ATP + H2O = D-methionine(in) + ADP + phosphate + H(+). Its function is as follows. Part of the ABC transporter complex MetNIQ involved in methionine import. Responsible for energy coupling to the transport system. This chain is Methionine import ATP-binding protein MetN 2, found in Pectobacterium atrosepticum (strain SCRI 1043 / ATCC BAA-672) (Erwinia carotovora subsp. atroseptica).